Consider the following 530-residue polypeptide: Na(+)/H(+) antiporter NhaB (530 aa).

12 helical membrane-spanning segments follow: residues 13 to 33 (FLGK…VINP), 34 to 54 (LVFF…EFIF), 90 to 110 (LVAN…IYFM), 121 to 141 (ILIG…TAAF), 145 to 165 (FLDA…FYAI), 205 to 225 (LLMH…VGEP), 241 to 261 (FIIR…LTCI), 306 to 326 (GLIA…VGLI), 351 to 371 (EEAL…AVII), 393 to 413 (LALF…VFVG), 455 to 475 (GQAA…QLSY), and 481 to 501 (MALP…IFFL).

The protein belongs to the NhaB Na(+)/H(+) (TC 2.A.34) antiporter family.

Its subcellular location is the cell inner membrane. The catalysed reaction is 2 Na(+)(in) + 3 H(+)(out) = 2 Na(+)(out) + 3 H(+)(in). Functionally, na(+)/H(+) antiporter that extrudes sodium in exchange for external protons. This is Na(+)/H(+) antiporter NhaB from Aliivibrio fischeri (strain ATCC 700601 / ES114) (Vibrio fischeri).